The chain runs to 381 residues: UDP-N-acetylglucosamine--N-acetylmuramyl-(pentapeptide) pyrophosphoryl-undecaprenol N-acetylglucosamine transferase (381 aa).

UDP-N-acetyl-alpha-D-glucosamine contacts are provided by residues 10–12 (TGG), Asn-124, Arg-165, Ser-190, Ile-245, and Gln-290. Positions 361 to 381 (WGSPAGQERPGHGPVRPPDLA) are disordered.

It belongs to the glycosyltransferase 28 family. MurG subfamily.

It localises to the cell inner membrane. The enzyme catalyses di-trans,octa-cis-undecaprenyl diphospho-N-acetyl-alpha-D-muramoyl-L-alanyl-D-glutamyl-meso-2,6-diaminopimeloyl-D-alanyl-D-alanine + UDP-N-acetyl-alpha-D-glucosamine = di-trans,octa-cis-undecaprenyl diphospho-[N-acetyl-alpha-D-glucosaminyl-(1-&gt;4)]-N-acetyl-alpha-D-muramoyl-L-alanyl-D-glutamyl-meso-2,6-diaminopimeloyl-D-alanyl-D-alanine + UDP + H(+). It functions in the pathway cell wall biogenesis; peptidoglycan biosynthesis. In terms of biological role, cell wall formation. Catalyzes the transfer of a GlcNAc subunit on undecaprenyl-pyrophosphoryl-MurNAc-pentapeptide (lipid intermediate I) to form undecaprenyl-pyrophosphoryl-MurNAc-(pentapeptide)GlcNAc (lipid intermediate II). The chain is UDP-N-acetylglucosamine--N-acetylmuramyl-(pentapeptide) pyrophosphoryl-undecaprenol N-acetylglucosamine transferase from Anaeromyxobacter sp. (strain Fw109-5).